We begin with the raw amino-acid sequence, 60 residues long: Large ribosomal subunit protein uL30 (60 aa).

The protein belongs to the universal ribosomal protein uL30 family. As to quaternary structure, part of the 50S ribosomal subunit.

The chain is Large ribosomal subunit protein uL30 from Desulfotalea psychrophila (strain LSv54 / DSM 12343).